Consider the following 262-residue polypeptide: Shikimate dehydrogenase (NADP(+)) (262 aa).

Residues 15–17 (SRS) and Thr62 each bind shikimate. Lys66 (proton acceptor) is an active-site residue. Position 78 (Glu78) interacts with NADP(+). Residues Asn87 and Asp102 each coordinate shikimate. NADP(+)-binding positions include 126–130 (GAGGA), 150–155 (NRTLAR), and Met214. Position 216 (Tyr216) interacts with shikimate. Gly236 serves as a coordination point for NADP(+).

Belongs to the shikimate dehydrogenase family. In terms of assembly, homodimer.

The catalysed reaction is shikimate + NADP(+) = 3-dehydroshikimate + NADPH + H(+). Its pathway is metabolic intermediate biosynthesis; chorismate biosynthesis; chorismate from D-erythrose 4-phosphate and phosphoenolpyruvate: step 4/7. In terms of biological role, involved in the biosynthesis of the chorismate, which leads to the biosynthesis of aromatic amino acids. Catalyzes the reversible NADPH linked reduction of 3-dehydroshikimate (DHSA) to yield shikimate (SA). In Acinetobacter baumannii (strain ATCC 17978 / DSM 105126 / CIP 53.77 / LMG 1025 / NCDC KC755 / 5377), this protein is Shikimate dehydrogenase (NADP(+)).